A 353-amino-acid polypeptide reads, in one-letter code: MPWPLLLLLAVSGAQTTRPCFPGCQCEVETFGLFDSFSLTRVDCSGLGPHIMPVPIPLDTAHLDLSSNRLEMVNESVLAGPGYTTLAGLDLSHNLLTSISPTAFSRLRYLESLDLSHNGLTALPAESFTSSPLSDVNLSHNQLREVSVSAFTTHSQGRALHVDLSHNLIHRLVPHPTRAGLPAPTIQSLNLAWNRLHAVPNLRDLPLRYLSLDGNPLAVIGPGAFAGLGGLTHLSLASLQRLPELAPSGFRELPGLQVLDLSGNPKLNWAGAEVFSGLSSLQELDLSGTNLVPLPEALLLHLPALQSVSVGQDVRCRRLVREGTYPRRPGSSPKVALHCVDTRDSAARGPTIL.

The first 16 residues, 1 to 16 (MPWPLLLLLAVSGAQT), serve as a signal peptide directing secretion. The region spanning 17–58 (TRPCFPGCQCEVETFGLFDSFSLTRVDCSGLGPHIMPVPIPL) is the LRRNT domain. LRR repeat units follow at residues 59 to 80 (DTAHLDLSSNRLEMVNESVLAG), 85 to 106 (TLAGLDLSHNLLTSISPTAFSR), 109 to 130 (YLESLDLSHNGLTALPAESFTS), 132 to 153 (PLSDVNLSHNQLREVSVSAFTT), 159 to 179 (ALHVDLSHNLIHRLVPHPTRA), 185 to 206 (TIQSLNLAWNRLHAVPNLRDLP), 207 to 227 (LRYLSLDGNPLAVIGPGAFAG), 230 to 249 (GLTHLSLASLQRLPELAPSG), 255 to 276 (GLQVLDLSGNPKLNWAGAEVFS), and 280 to 301 (SLQELDLSGTNLVPLPEALLLH). N-linked (GlcNAc...) asparagine glycosylation occurs at Asn74. Asn137 is a glycosylation site (N-linked (GlcNAc...) asparagine).

Interacts with FZD4 (via FZ domain); competes with WNT2B for binding to FZD4, inhibiting Wnt signaling and repressing peripheral eye development. Interacts with TGFB1; the interaction contributes to regulation of the hair cycle. Interacts with netrin. Interacts with CCN2.

The protein resides in the secreted. Its function is as follows. Contributes to various developmental events and other processes such as wound healing and cholesterol homeostasis through its interactions with multiple signaling pathways. Wnt signaling inhibitor which competes with WNT2B for binding to Wnt receptor FZD4 and represses WNT2B-dependent development of the peripheral eye. Plays a role in regulating the hair cycle by controlling TGFB1 signaling. Required for the development of the anterior commissure in the brain by inhibiting neurite outgrowth. Essential for terminal differentiation of hippocampal neural stem cells. Plays a role in regulating bone elongation and bone mass by modulating growth plate chondrocyte function and overall body size. Required for development of the inner ear through its involvement in stereocilia formation in inner hair cells. Facilitates wound healing by inhibiting secretion of TGFB1 from macrophages which prevents myofibroblast differentiation, maintaining inflammatory cell quiescence. Plays a role in cholesterol homeostasis by reducing circulating high-density lipoprotein cholesterol, lowering cholesterol efflux capacity and decreasing cholesterol-to-bile acid conversion in the liver. In one study, shown to negatively regulate sympathetic innervation in brown fat, leading to reduced energy expenditure. In another study, shown not to affect brown fat thermogenic capacity, body weight gain or glucose homeostasis. The protein is Tsukushi (TSKU) of Homo sapiens (Human).